The following is a 111-amino-acid chain: Cytochrome c (111 aa).

An N-acetylalanine modification is found at Ala-1. 3 residues coordinate heme c: Cys-22, Cys-25, and His-26. At Lys-80 the chain carries N6,N6,N6-trimethyllysine. Met-88 is a heme c binding site. An N6,N6,N6-trimethyllysine modification is found at Lys-94.

The protein belongs to the cytochrome c family. Post-translationally, binds 1 heme c group covalently per subunit.

It is found in the mitochondrion intermembrane space. Its function is as follows. Electron carrier protein. The oxidized form of the cytochrome c heme group can accept an electron from the heme group of the cytochrome c1 subunit of cytochrome reductase. Cytochrome c then transfers this electron to the cytochrome oxidase complex, the final protein carrier in the mitochondrial electron-transport chain. The sequence is that of Cytochrome c from Nigella damascena (Love-in-a-mist).